Consider the following 97-residue polypeptide: Large ribosomal subunit protein eL21 (97 aa).

The protein belongs to the eukaryotic ribosomal protein eL21 family.

In Methanosarcina barkeri (strain Fusaro / DSM 804), this protein is Large ribosomal subunit protein eL21.